Consider the following 418-residue polypeptide: Serine proteinase inhibitor 2.4 (418 aa).

The first 28 residues, 1–28, serve as a signal peptide directing secretion; that stretch reads MAFIAALGIFMAGICPAVLCFPNGTLGR. N-linked (GlcNAc...) asparagine glycosylation is found at asparagine 23, asparagine 38, asparagine 104, and asparagine 269.

The protein belongs to the serpin family.

The protein localises to the secreted. This chain is Serine proteinase inhibitor 2.4, found in Apodemus sylvaticus (European woodmouse).